A 428-amino-acid chain; its full sequence is MTSSRLPVLLALVFSSLSPVLSHSNREMWFQDLFPPNTCPINAKTKTFYGIMFDAGSTGTRIHIYTFVQKSPEILPELEGEIFESVKPGLSAYADQPEKGAESVKRLLDMAIDAVPPHLWKKTPVVLKATAGLRLLSEEKAQALLSEVKEVFEESPFLVPEDSVSIMDGSYEGILAWITVNFLTGQLSGQNQHTVGTLDLGGASTQITFLPRFEETLKESPTDFLTSFEMFNSTYKLYTHSYLGFGLKAARLATLGALNTEVADRQMFRSSCLPKQLEAEWHFGGVKYRYGGNKEGETGFKPCYLEVLKVVKGKLHQPDEIRGSSFYAFSYYYDRAADTNLIDYEQGGVLEVRDFERKAKEVCDNMERFSSASPFLCMDLTYITALLKEGFGFRDNTLLQLTKKVNNIETSWTLGATFHLLQSLGITY.

A signal peptide spans 1 to 24; that stretch reads MTSSRLPVLLALVFSSLSPVLSHS. The active-site Proton acceptor is E172. Residue N232 is glycosylated (N-linked (GlcNAc...) asparagine). 2 cysteine pairs are disulfide-bonded: C272–C303 and C363–C377.

It belongs to the GDA1/CD39 NTPase family. As to quaternary structure, monomer; active form. Homodimer; disulfide-linked. Homodimers are enzymatically inactive. The cofactor is Ca(2+). Requires Mg(2+) as cofactor.

The protein resides in the endoplasmic reticulum. The protein localises to the secreted. The enzyme catalyses a ribonucleoside 5'-diphosphate + H2O = a ribonucleoside 5'-phosphate + phosphate + H(+). It catalyses the reaction GDP + H2O = GMP + phosphate + H(+). It carries out the reaction UDP + H2O = UMP + phosphate + H(+). The catalysed reaction is IDP + H2O = IMP + phosphate + H(+). The enzyme catalyses CDP + H2O = CMP + phosphate + H(+). It catalyses the reaction ADP + H2O = AMP + phosphate + H(+). Its pathway is protein modification; protein glycosylation. In terms of biological role, hydrolyzes nucleoside diphosphates with a preference for GDP, IDP and UDP compared to ADP and CDP. In the lumen of the endoplasmic reticulum, hydrolyzes UDP that acts as an end-product feedback inhibitor of the UDP-Glc:glycoprotein glucosyltransferases. UMP can be transported back by an UDP-sugar antiporter to the cytosol where it is consumed to regenerate UDP-glucose. Therefore, it positively regulates protein reglucosylation by clearing UDP from the ER lumen and by promoting the regeneration of UDP-glucose. Protein reglucosylation is essential to proper glycoprotein folding and quality control in the ER. This chain is Ectonucleoside triphosphate diphosphohydrolase 5 (ENTPD5), found in Gallus gallus (Chicken).